A 260-amino-acid chain; its full sequence is Diphthine synthase (260 aa).

S-adenosyl-L-methionine is bound by residues L9, D85, I88, 113–114 (TA), L168, A208, and H233.

This sequence belongs to the diphthine synthase family. As to quaternary structure, homodimer.

The catalysed reaction is 2-[(3S)-amino-3-carboxypropyl]-L-histidyl-[translation elongation factor 2] + 3 S-adenosyl-L-methionine = diphthine-[translation elongation factor 2] + 3 S-adenosyl-L-homocysteine + 3 H(+). It participates in protein modification; peptidyl-diphthamide biosynthesis. In terms of biological role, S-adenosyl-L-methionine-dependent methyltransferase that catalyzes the trimethylation of the amino group of the modified target histidine residue in translation elongation factor 2 (EF-2), to form an intermediate called diphthine. The three successive methylation reactions represent the second step of diphthamide biosynthesis. The polypeptide is Diphthine synthase (Halobacterium salinarum (strain ATCC 29341 / DSM 671 / R1)).